The primary structure comprises 906 residues: Protein translocase subunit SecA (906 aa).

ATP is bound by residues glutamine 86, 104–108 (GEGKT), and aspartate 511. Basic and acidic residues-rich tracts occupy residues 853 to 865 (HESV…RHDE) and 877 to 888 (VRREGPKVKRND). The segment at 853–906 (HESVIDNNQRHDEDEQEEAPKVQQVRREGPKVKRNDPCPCGSGKKYKQCHGKVE) is disordered. The Zn(2+) site is built by cysteine 890, cysteine 892, cysteine 901, and histidine 902. Over residues 896–906 (KKYKQCHGKVE) the composition is skewed to basic residues.

The protein belongs to the SecA family. Monomer and homodimer. Part of the essential Sec protein translocation apparatus which comprises SecA, SecYEG and auxiliary proteins SecDF-YajC and YidC. Zn(2+) serves as cofactor.

The protein localises to the cell inner membrane. The protein resides in the cytoplasm. It catalyses the reaction ATP + H2O + cellular proteinSide 1 = ADP + phosphate + cellular proteinSide 2.. Part of the Sec protein translocase complex. Interacts with the SecYEG preprotein conducting channel. Has a central role in coupling the hydrolysis of ATP to the transfer of proteins into and across the cell membrane, serving both as a receptor for the preprotein-SecB complex and as an ATP-driven molecular motor driving the stepwise translocation of polypeptide chains across the membrane. This chain is Protein translocase subunit SecA, found in Francisella tularensis subsp. holarctica (strain FTNF002-00 / FTA).